We begin with the raw amino-acid sequence, 856 residues long: DNA mismatch repair protein MutS (856 aa).

618-625 (GPNMGGKS) is an ATP binding site.

Belongs to the DNA mismatch repair MutS family.

In terms of biological role, this protein is involved in the repair of mismatches in DNA. It is possible that it carries out the mismatch recognition step. This protein has a weak ATPase activity. In Shewanella baltica (strain OS195), this protein is DNA mismatch repair protein MutS.